The chain runs to 743 residues: DNA ligase 2 (743 aa).

Residues 45–49 (DADFD), 94–95 (SL), and Glu125 contribute to the NAD(+) site. Lys127 (N6-AMP-lysine intermediate) is an active-site residue. NAD(+) contacts are provided by Arg148, Glu185, Lys301, and Lys325. Zn(2+) is bound by residues Cys419, Cys422, Cys438, and Cys444. In terms of domain architecture, BRCT spans 639-728 (EGPRPLEGLT…PERAKEAALP (90 aa)). The segment at 720–743 (ERAKEAALPVPEAAPAADPENSGE) is disordered. Residues 725–743 (AALPVPEAAPAADPENSGE) are compositionally biased toward low complexity.

This sequence belongs to the NAD-dependent DNA ligase family. LigA subfamily. Requires Mg(2+) as cofactor. Mn(2+) serves as cofactor.

It catalyses the reaction NAD(+) + (deoxyribonucleotide)n-3'-hydroxyl + 5'-phospho-(deoxyribonucleotide)m = (deoxyribonucleotide)n+m + AMP + beta-nicotinamide D-nucleotide.. Functionally, DNA ligase that catalyzes the formation of phosphodiester linkages between 5'-phosphoryl and 3'-hydroxyl groups in double-stranded DNA using NAD as a coenzyme and as the energy source for the reaction. It is essential for DNA replication and repair of damaged DNA. In Streptomyces griseus subsp. griseus (strain JCM 4626 / CBS 651.72 / NBRC 13350 / KCC S-0626 / ISP 5235), this protein is DNA ligase 2.